A 200-amino-acid chain; its full sequence is Large ribosomal subunit protein uL4 (200 aa).

Residues threonine 42–glycine 65 are disordered.

Belongs to the universal ribosomal protein uL4 family. In terms of assembly, part of the 50S ribosomal subunit.

Functionally, one of the primary rRNA binding proteins, this protein initially binds near the 5'-end of the 23S rRNA. It is important during the early stages of 50S assembly. It makes multiple contacts with different domains of the 23S rRNA in the assembled 50S subunit and ribosome. In terms of biological role, forms part of the polypeptide exit tunnel. This chain is Large ribosomal subunit protein uL4, found in Photobacterium profundum (strain SS9).